The primary structure comprises 162 residues: NADH-quinone oxidoreductase subunit I (162 aa).

2 4Fe-4S ferredoxin-type domains span residues 53 to 83 (LRRY…IEAE) and 93 to 122 (TRYD…EGPN). [4Fe-4S] cluster-binding residues include C63, C66, C69, C73, C102, C105, C108, and C112.

It belongs to the complex I 23 kDa subunit family. As to quaternary structure, NDH-1 is composed of 14 different subunits. Subunits NuoA, H, J, K, L, M, N constitute the membrane sector of the complex. The cofactor is [4Fe-4S] cluster.

The protein resides in the cell inner membrane. It carries out the reaction a quinone + NADH + 5 H(+)(in) = a quinol + NAD(+) + 4 H(+)(out). In terms of biological role, NDH-1 shuttles electrons from NADH, via FMN and iron-sulfur (Fe-S) centers, to quinones in the respiratory chain. The immediate electron acceptor for the enzyme in this species is believed to be ubiquinone. Couples the redox reaction to proton translocation (for every two electrons transferred, four hydrogen ions are translocated across the cytoplasmic membrane), and thus conserves the redox energy in a proton gradient. This is NADH-quinone oxidoreductase subunit I from Rhodospirillum rubrum (strain ATCC 11170 / ATH 1.1.1 / DSM 467 / LMG 4362 / NCIMB 8255 / S1).